Here is a 342-residue protein sequence, read N- to C-terminus: S-adenosylmethionine:tRNA ribosyltransferase-isomerase (342 aa).

Belongs to the QueA family. As to quaternary structure, monomer.

The protein localises to the cytoplasm. It carries out the reaction 7-aminomethyl-7-carbaguanosine(34) in tRNA + S-adenosyl-L-methionine = epoxyqueuosine(34) in tRNA + adenine + L-methionine + 2 H(+). The protein operates within tRNA modification; tRNA-queuosine biosynthesis. Transfers and isomerizes the ribose moiety from AdoMet to the 7-aminomethyl group of 7-deazaguanine (preQ1-tRNA) to give epoxyqueuosine (oQ-tRNA). This Listeria welshimeri serovar 6b (strain ATCC 35897 / DSM 20650 / CCUG 15529 / CIP 8149 / NCTC 11857 / SLCC 5334 / V8) protein is S-adenosylmethionine:tRNA ribosyltransferase-isomerase.